A 145-amino-acid polypeptide reads, in one-letter code: Large-conductance mechanosensitive channel (145 aa).

The next 2 membrane-spanning stretches (helical) occupy residues 14–34 (VIDL…VDSL) and 81–101 (GIFI…FLMV).

This sequence belongs to the MscL family. In terms of assembly, homopentamer.

The protein resides in the cell inner membrane. In terms of biological role, channel that opens in response to stretch forces in the membrane lipid bilayer. May participate in the regulation of osmotic pressure changes within the cell. The chain is Large-conductance mechanosensitive channel from Pelobacter propionicus (strain DSM 2379 / NBRC 103807 / OttBd1).